Reading from the N-terminus, the 591-residue chain is L-fucose isomerase (591 aa).

Active-site proton acceptor residues include Glu337 and Asp361. Glu337, Asp361, and His528 together coordinate Mn(2+).

Belongs to the L-fucose isomerase family. Homohexamer. Mn(2+) is required as a cofactor.

It localises to the cytoplasm. It catalyses the reaction L-fucose = L-fuculose. It participates in carbohydrate degradation; L-fucose degradation; L-lactaldehyde and glycerone phosphate from L-fucose: step 1/3. Functionally, converts the aldose L-fucose into the corresponding ketose L-fuculose. The protein is L-fucose isomerase of Escherichia coli (strain SE11).